Reading from the N-terminus, the 350-residue chain is Biotin synthase (350 aa).

Positions 54-278 constitute a Radical SAM core domain; the sequence is REIQLSTLLS…TMPQSYVRLS (225 aa). [4Fe-4S] cluster is bound by residues C69, C73, and C76. [2Fe-2S] cluster contacts are provided by C113, C144, C204, and R276.

It belongs to the radical SAM superfamily. Biotin synthase family. As to quaternary structure, homodimer. [4Fe-4S] cluster is required as a cofactor. It depends on [2Fe-2S] cluster as a cofactor.

The catalysed reaction is (4R,5S)-dethiobiotin + (sulfur carrier)-SH + 2 reduced [2Fe-2S]-[ferredoxin] + 2 S-adenosyl-L-methionine = (sulfur carrier)-H + biotin + 2 5'-deoxyadenosine + 2 L-methionine + 2 oxidized [2Fe-2S]-[ferredoxin]. It functions in the pathway cofactor biosynthesis; biotin biosynthesis; biotin from 7,8-diaminononanoate: step 2/2. In terms of biological role, catalyzes the conversion of dethiobiotin (DTB) to biotin by the insertion of a sulfur atom into dethiobiotin via a radical-based mechanism. This is Biotin synthase from Neisseria meningitidis serogroup C / serotype 2a (strain ATCC 700532 / DSM 15464 / FAM18).